Here is a 258-residue protein sequence, read N- to C-terminus: uncharacterized protein (258 aa).

The next 5 membrane-spanning stretches (helical) occupy residues 14–34 (LAFP…LAAI), 53–73 (VIIW…YFFV), 110–130 (AALC…WLAL), 185–205 (GLAL…GIIF), and 238–258 (GINT…AQLI).

It belongs to the TMEM19 family.

The protein localises to the cell membrane. This is an uncharacterized protein from Synechocystis sp. (strain ATCC 27184 / PCC 6803 / Kazusa).